Here is a 433-residue protein sequence, read N- to C-terminus: Glutamate-1-semialdehyde 2,1-aminomutase (433 aa).

Position 269 is an N6-(pyridoxal phosphate)lysine (K269).

It belongs to the class-III pyridoxal-phosphate-dependent aminotransferase family. HemL subfamily. As to quaternary structure, homodimer. The cofactor is pyridoxal 5'-phosphate.

The protein resides in the cytoplasm. It catalyses the reaction (S)-4-amino-5-oxopentanoate = 5-aminolevulinate. The protein operates within porphyrin-containing compound metabolism; protoporphyrin-IX biosynthesis; 5-aminolevulinate from L-glutamyl-tRNA(Glu): step 2/2. This Francisella philomiragia subsp. philomiragia (strain ATCC 25017 / CCUG 19701 / FSC 153 / O#319-036) protein is Glutamate-1-semialdehyde 2,1-aminomutase.